Reading from the N-terminus, the 346-residue chain is DNA-directed RNA polymerases I and III subunit RPAC1 (346 aa).

Ala2 carries the post-translational modification N-acetylalanine.

Belongs to the archaeal Rpo3/eukaryotic RPB3 RNA polymerase subunit family. In terms of assembly, component of the RNA polymerase I and RNA polymerase III complexes consisting of at least 13 and 17 subunits, respectively. Pol I complex consists of a ten-subunit catalytic core composed of POLR1A/RPA1, POLR1B/RPA2, POLR1C/RPAC1, POLR1D/RPAC2, POLR1H/RPA12, POLR2E/RPABC1, POLR2F/RPABC2, POLR2H/RPABC3, POLR2K/RPABC4 and POLR2L/RPABC5; a mobile stalk subunit POLR1F/RPA43 protruding from the core and additional subunits homologous to general transcription factors POLR1E/RPA49 and POLR1G/RPA34. Part of Pol I pre-initiation complex (PIC), in which Pol I core assembles with RRN3 and promoter-bound UTBF and SL1/TIF-IB complex. Pol III complex consists of a ten-subunit catalytic core composed of POLR3A/RPC1, POLR3B/RPC2, POLR1C/RPAC1, POLR1D/RPAC2, POLR3K/RPC10, POLR2E/RPABC1, POLR2F/RPABC2, POLR2H/RPABC3, POLR2K/RPABC4 and POLR2L/RPABC5; a mobile stalk composed of two subunits POLR3H/RPC8 and CRCP/RPC9, protruding from the core and functioning primarily in transcription initiation; and additional subunits homologous to general transcription factors of the RNA polymerase II machinery, POLR3C/RPC3-POLR3F/RPC6-POLR3G/RPC7 heterotrimer required for transcription initiation and POLR3D/RPC4-POLR3E/RPC5 heterodimer involved in both transcription initiation and termination.

The protein localises to the nucleus. It is found in the cytoplasm. Its subcellular location is the cytosol. DNA-dependent RNA polymerase catalyzes the transcription of DNA into RNA using the four ribonucleoside triphosphates as substrates. Common component of RNA polymerases I and III which synthesize ribosomal RNA precursors and short non-coding RNAs including 5S rRNA, snRNAs, tRNAs and miRNAs, respectively. POLR1C/RPAC1 is part of the polymerase core and may function as a clamp element that moves to open and close the cleft. This chain is DNA-directed RNA polymerases I and III subunit RPAC1 (POLR1C), found in Bos taurus (Bovine).